The following is a 283-amino-acid chain: MASQLVLRKADFFATPTQPVVVADRYPQNVFAEHTHEFCELVLVWRGNGLHVLNDRPYRITCGDLFYIRAEDRHSYQSVNDLVLHNIIYCPERLQLNVNWRDLLENPRGVNGDPRWRLSSQGMVQARQVIDQLEHESPKQDALSHCLAESLFLQLAITLRRHRYQPSGGTGPGEGETLDLLMAALGNSLDVPFDLQHFCSHYQIAERPLRQLFRQQTGMTISQYLRQLRICQAQYLLRHSSLLISEIAARCGFEDSNYFSVVFTRETGVTPRVWRQQWGALAG.

The 99-residue stretch at 179–277 (DLLMAALGNS…GVTPRVWRQQ (99 aa)) folds into the HTH araC/xylS-type domain. 2 consecutive DNA-binding regions (H-T-H motif) follow at residues 196–217 (QHFC…RQQT) and 244–267 (ISEI…TRET).

In terms of assembly, binds DNA as a dimer.

The protein localises to the cytoplasm. Functionally, activates expression of the rhaSR operon in response to L-rhamnose. The protein is HTH-type transcriptional activator RhaR of Cronobacter sakazakii (strain ATCC BAA-894) (Enterobacter sakazakii).